We begin with the raw amino-acid sequence, 122 residues long: Large ribosomal subunit protein uL14 (122 aa).

Belongs to the universal ribosomal protein uL14 family. Part of the 50S ribosomal subunit. Forms a cluster with proteins L3 and L19. In the 70S ribosome, L14 and L19 interact and together make contacts with the 16S rRNA in bridges B5 and B8.

In terms of biological role, binds to 23S rRNA. Forms part of two intersubunit bridges in the 70S ribosome. This chain is Large ribosomal subunit protein uL14, found in Trichormus variabilis (strain ATCC 29413 / PCC 7937) (Anabaena variabilis).